A 314-amino-acid polypeptide reads, in one-letter code: Olfactory receptor 5P62 (314 aa).

The Extracellular portion of the chain corresponds to 1–28 (MAFIYNGSQTTVTEFILLGLTDDPVLKV). The N-linked (GlcNAc...) asparagine glycan is linked to Asn-6. A helical transmembrane segment spans residues 29-49 (ILFCIILCIYLVTVFGNLSTI). Residues 50 to 57 (LLIGVSSK) lie on the Cytoplasmic side of the membrane. A helical transmembrane segment spans residues 58 to 78 (LHHPMYFFLSHLASVDMGLSS). The Extracellular segment spans residues 79–102 (SVTPNMLVNFLTEKNTISYLGCGI). Cys-100 and Cys-192 form a disulfide bridge. Residues 103 to 123 (QLSSAAFFGAVEFFLLAAMAY) traverse the membrane as a helical segment. Over 124-136 (DRLVAICNPLLYS) the chain is Cytoplasmic. The helical transmembrane segment at 137 to 157 (TKMSSQVCIQLVAGSYVGGFL) threads the bilayer. Residues 158–199 (NASFVTHFFFSFLFCGPNRVNHFFCDLSPMMELSCSDVSISE) lie on the Extracellular side of the membrane. The helical transmembrane segment at 200 to 220 (IVISFSAGSFTMTTLFVIVIP) threads the bilayer. Residues 221–240 (YFYIFITILKIRSTEGRQKA) lie on the Cytoplasmic side of the membrane. A helical membrane pass occupies residues 241–261 (FSTCTSHLTAVTLYYGTIIFI). The Extracellular segment spans residues 262–274 (YVMPKSTYSRDQN). A helical membrane pass occupies residues 275–295 (KVVSLFYMLVIPVLNPLIYSL). Residues 296–314 (RNNEIKDALKRQFYRKTLL) are Cytoplasmic-facing.

The protein belongs to the G-protein coupled receptor 1 family.

It localises to the cell membrane. In terms of biological role, potential odorant receptor. The protein is Olfactory receptor 5P62 of Mus musculus (Mouse).